A 632-amino-acid polypeptide reads, in one-letter code: Putative ankyrin repeat protein L767 (632 aa).

ANK repeat units lie at residues 61 to 97 (YGNT…DYEF), 228 to 250 (FDNE…YIVE), 251 to 282 (KGFY…NLTD), 345 to 374 (NLDI…NVDD), and 517 to 546 (NSIE…NDTD).

This chain is Putative ankyrin repeat protein L767, found in Acanthamoeba polyphaga mimivirus (APMV).